We begin with the raw amino-acid sequence, 360 residues long: E3 ubiquitin-protein ligase RNF146 (360 aa).

Residues Cys37 to Arg75 form an RING-type zinc finger. Residues Lys85 and Lys95 each participate in a glycyl lysine isopeptide (Lys-Gly) (interchain with G-Cter in ubiquitin) cross-link. The region spanning Glu92 to Arg168 is the WWE domain. A glycoprotein is bound by residues Tyr108, Arg111, and Trp115. Lys131 is covalently cross-linked (Glycyl lysine isopeptide (Lys-Gly) (interchain with G-Cter in ubiquitin)). A glycoprotein-binding residues include Tyr145, Gln154, Arg164, and Lys176. A Glycyl lysine isopeptide (Lys-Gly) (interchain with G-Cter in ubiquitin) cross-link involves residue Lys176. The segment at Glu259 to Val360 is disordered. Acidic residues predominate over residues Ser284–Ser294. A phosphoserine mark is found at Ser290 and Ser294. Residues Asp295–Ala305 are compositionally biased toward low complexity. A compositionally biased stretch (polar residues) spans His307–Asp333.

Can form homooligomers. Interacts with PARsylated AXIN1, AXIN2, BLZF1, CASC3, H1-2, IPO7, LIG3, NCL, PARP1, XRCC1, XRCC5 and XRCC6. Interacts with DDB1, DHX15, IQGAP1, LRPPRC, PARP2, PRKDC, RUVBL2, TNKS1 and TNKS2. Binding often leads to interactor ubiquitination, in the presence of the appropriate E1 and E2 enzymes, and proteasomal degradation. Ubiquitinated; autoubiquitinated. Autoubiquitination is enhanced upon poly(ADP-ribose)-binding.

Its subcellular location is the cytoplasm. The protein localises to the cytosol. The protein resides in the nucleus. The enzyme catalyses S-ubiquitinyl-[E2 ubiquitin-conjugating enzyme]-L-cysteine + [acceptor protein]-L-lysine = [E2 ubiquitin-conjugating enzyme]-L-cysteine + N(6)-ubiquitinyl-[acceptor protein]-L-lysine.. It participates in protein modification; protein ubiquitination. E3 ubiquitin-protein ligase that specifically binds poly-ADP-ribosylated (PARsylated) proteins and mediates their ubiquitination and subsequent degradation. May regulate many important biological processes, such as cell survival and DNA damage response. Acts as an activator of the Wnt signaling pathway by mediating the ubiquitination of PARsylated AXIN1 and AXIN2, 2 key components of the beta-catenin destruction complex. Acts in cooperation with tankyrase proteins (TNKS and TNKS2), which mediate PARsylation of target proteins AXIN1, AXIN2, BLZF1, CASC3, TNKS and TNKS2. Recognizes and binds tankyrase-dependent PARsylated proteins via its WWE domain and mediates their ubiquitination, leading to their degradation. Different ubiquitin linkage types have been observed: TNKS2 undergoes ubiquitination at 'Lys-48' and 'Lys-63', while AXIN1 is only ubiquitinated at 'Lys-48'. May regulate TNKS and TNKS2 subcellular location, preventing aggregation at a centrosomal location. Neuroprotective protein. Protects the brain against N-methyl-D-aspartate (NMDA) receptor-mediated glutamate excitotoxicity and ischemia, by interfering with PAR-induced cell death, called parthanatos. Prevents nuclear translocation of AIFM1 in a PAR-binding dependent manner. Does not affect PARP1 activation. Protects against cell death induced by DNA damaging agents, such as N-methyl-N-nitro-N-nitrosoguanidine (MNNG) and rescues cells from G1 arrest. Promotes cell survival after gamma-irradiation. Facilitates DNA repair. The chain is E3 ubiquitin-protein ligase RNF146 (RNF146) from Macaca fascicularis (Crab-eating macaque).